The chain runs to 326 residues: Probable cell division protein WhiA (326 aa).

The segment at residues 275-308 is a DNA-binding region (H-T-H motif); the sequence is SLEELGQLAEPPMTKDAVAGRIRRLLAMADKRAR.

It belongs to the WhiA family.

In terms of biological role, involved in cell division and chromosome segregation. This is Probable cell division protein WhiA from Saccharopolyspora erythraea (strain ATCC 11635 / DSM 40517 / JCM 4748 / NBRC 13426 / NCIMB 8594 / NRRL 2338).